Reading from the N-terminus, the 160-residue chain is Sec-independent protein translocase protein TatB (160 aa).

Residues 1–21 (MFGMGFFEILVVLIVAIIFLG) form a helical membrane-spanning segment. Positions 118–160 (HLNEEVSNEEALNKEVSSDESPKEVQLTTDNNAKEHDKEKEHV) are disordered. Basic and acidic residues-rich tracts occupy residues 128–140 (ALNKEVSSDESPK) and 149–160 (NAKEHDKEKEHV).

This sequence belongs to the TatB family. The Tat system comprises two distinct complexes: a TatABC complex, containing multiple copies of TatA, TatB and TatC subunits, and a separate TatA complex, containing only TatA subunits. Substrates initially bind to the TatABC complex, which probably triggers association of the separate TatA complex to form the active translocon.

It is found in the cell inner membrane. Part of the twin-arginine translocation (Tat) system that transports large folded proteins containing a characteristic twin-arginine motif in their signal peptide across membranes. Together with TatC, TatB is part of a receptor directly interacting with Tat signal peptides. TatB may form an oligomeric binding site that transiently accommodates folded Tat precursor proteins before their translocation. This is Sec-independent protein translocase protein TatB from Helicobacter pylori (strain J99 / ATCC 700824) (Campylobacter pylori J99).